The sequence spans 674 residues: RNA polymerase sigma factor RpoD (674 aa).

Residues 214 to 252 form a disordered region; sequence AEGAAPAARRPASDEPEYDADGNPISRIDEEEDDDDSSN. A sigma-70 factor domain-2 region spans residues 440–510; it reads MVEANLRLVI…TRSIADQART (71 aa). Positions 464 to 467 match the Interaction with polymerase core subunit RpoC motif; that stretch reads DLIQ. Residues 519–595 form a sigma-70 factor domain-3 region; that stretch reads ETINKLVRTG…DKNAILPLDS (77 aa). Positions 608–661 are sigma-70 factor domain-4; it reads VLASLTPREERVLRMRFGIGMNTDHTLEEVGQQFSVTRERIRQIEAKALRKLKH. The H-T-H motif DNA-binding region spans 634–653; that stretch reads LEEVGQQFSVTRERIRQIEA.

It belongs to the sigma-70 factor family. RpoD/SigA subfamily. Interacts transiently with the RNA polymerase catalytic core.

The protein localises to the cytoplasm. In terms of biological role, sigma factors are initiation factors that promote the attachment of RNA polymerase to specific initiation sites and are then released. This sigma factor is the primary sigma factor during exponential growth. The polypeptide is RNA polymerase sigma factor RpoD (Rhodobacter capsulatus (strain ATCC BAA-309 / NBRC 16581 / SB1003)).